Here is a 196-residue protein sequence, read N- to C-terminus: MDSDFHVKPEIRILGIDDSALLNEKVMIVGTVFRGGDWIDGVLRSEITRDGLDATEVMVTMIKNSRHHNQLRVIMLDGITYGGFNVVDIEELYRETGLPVIVIMRSCPDFEKIRSALKHFSDGEERWKIIKKAGKIEKLITGRNGTPIYIQKAGIGAKNVEKIIRLTSIRSSIPEPLRVAHLIATGITLGESRGKA.

This sequence belongs to the UPF0215 family.

The polypeptide is UPF0215 protein MM_1007 (Methanosarcina mazei (strain ATCC BAA-159 / DSM 3647 / Goe1 / Go1 / JCM 11833 / OCM 88) (Methanosarcina frisia)).